Reading from the N-terminus, the 141-residue chain is uncharacterized protein (141 aa).

This is an uncharacterized protein from Arabidopsis thaliana (Mouse-ear cress).